Here is a 246-residue protein sequence, read N- to C-terminus: 1-(5-phosphoribosyl)-5-[(5-phosphoribosylamino)methylideneamino] imidazole-4-carboxamide isomerase (246 aa).

Aspartate 10 functions as the Proton acceptor in the catalytic mechanism. Residue aspartate 135 is the Proton donor of the active site.

Belongs to the HisA/HisF family.

It localises to the cytoplasm. The enzyme catalyses 1-(5-phospho-beta-D-ribosyl)-5-[(5-phospho-beta-D-ribosylamino)methylideneamino]imidazole-4-carboxamide = 5-[(5-phospho-1-deoxy-D-ribulos-1-ylimino)methylamino]-1-(5-phospho-beta-D-ribosyl)imidazole-4-carboxamide. The protein operates within amino-acid biosynthesis; L-histidine biosynthesis; L-histidine from 5-phospho-alpha-D-ribose 1-diphosphate: step 4/9. This chain is 1-(5-phosphoribosyl)-5-[(5-phosphoribosylamino)methylideneamino] imidazole-4-carboxamide isomerase, found in Methanosarcina mazei (strain ATCC BAA-159 / DSM 3647 / Goe1 / Go1 / JCM 11833 / OCM 88) (Methanosarcina frisia).